The sequence spans 878 residues: Alanine--tRNA ligase (878 aa).

Residues histidine 566, histidine 570, cysteine 668, and histidine 672 each coordinate Zn(2+).

This sequence belongs to the class-II aminoacyl-tRNA synthetase family. It depends on Zn(2+) as a cofactor.

It localises to the cytoplasm. It catalyses the reaction tRNA(Ala) + L-alanine + ATP = L-alanyl-tRNA(Ala) + AMP + diphosphate. Functionally, catalyzes the attachment of alanine to tRNA(Ala) in a two-step reaction: alanine is first activated by ATP to form Ala-AMP and then transferred to the acceptor end of tRNA(Ala). Also edits incorrectly charged Ser-tRNA(Ala) and Gly-tRNA(Ala) via its editing domain. The sequence is that of Alanine--tRNA ligase from Bacillus velezensis (strain DSM 23117 / BGSC 10A6 / LMG 26770 / FZB42) (Bacillus amyloliquefaciens subsp. plantarum).